We begin with the raw amino-acid sequence, 204 residues long: Recombination protein RecR (204 aa).

The C4-type zinc finger occupies 61–76 (CACCNTFSETQVCSTC). The Toprim domain maps to 84–183 (SLLCIVETPA…KVTRIARGIP (100 aa)).

It belongs to the RecR family.

In terms of biological role, may play a role in DNA repair. It seems to be involved in an RecBC-independent recombinational process of DNA repair. It may act with RecF and RecO. This Polynucleobacter necessarius subsp. necessarius (strain STIR1) protein is Recombination protein RecR.